The following is a 353-amino-acid chain: Keratocan (353 aa).

Positions 1-21 are cleaved as a signal peptide; that stretch reads MMTLKVCPSLLLLFLVHSVWT. In terms of domain architecture, LRRNT spans 34–72; the sequence is EHWSHYTFECPQECFCPPSFPNALYCDNKGLKEIPAIPA. 2 disulfide bridges follow: cysteine 43/cysteine 49 and cysteine 47/cysteine 59. LRR repeat units lie at residues 73–94, 97–118, 123–143, 144–165, 168–188, 194–214, 215–236, and 239–259; these read RIWY…PFVN, HLRW…SGVL, RLLY…PLPV, GLEQ…VFSN, NLTM…QSDT, SLMQ…SIPA, NTLQ…YFSA, and KVTF…PPNG. An N-linked (GlcNAc...) (keratan sulfate) asparagine glycan is attached at asparagine 94. Residue asparagine 168 is glycosylated (N-linked (GlcNAc...) asparagine). A glycan (N-linked (GlcNAc...) (keratan sulfate) asparagine) is linked at asparagine 223. N-linked (GlcNAc...) (keratan sulfate) asparagine glycosylation is present at asparagine 261. LRR repeat units lie at residues 264–283 and 284–305; these read SILD…PINA and HLEH…QICP. Asparagine 299 is a glycosylation site (N-linked (GlcNAc...) asparagine). A disulfide bond links cysteine 304 and cysteine 344.

This sequence belongs to the small leucine-rich proteoglycan (SLRP) family. SLRP class II subfamily. Cornea.

It is found in the secreted. The protein localises to the extracellular space. The protein resides in the extracellular matrix. In terms of biological role, plays an important role in generating and maintaining a transparent matrix within the corneal stroma. The chain is Keratocan (KERA) from Coturnix japonica (Japanese quail).